Consider the following 178-residue polypeptide: ATP synthase subunit delta (178 aa).

Belongs to the ATPase delta chain family. In terms of assembly, F-type ATPases have 2 components, F(1) - the catalytic core - and F(0) - the membrane proton channel. F(1) has five subunits: alpha(3), beta(3), gamma(1), delta(1), epsilon(1). F(0) has three main subunits: a(1), b(2) and c(10-14). The alpha and beta chains form an alternating ring which encloses part of the gamma chain. F(1) is attached to F(0) by a central stalk formed by the gamma and epsilon chains, while a peripheral stalk is formed by the delta and b chains.

It is found in the cell inner membrane. Functionally, f(1)F(0) ATP synthase produces ATP from ADP in the presence of a proton or sodium gradient. F-type ATPases consist of two structural domains, F(1) containing the extramembraneous catalytic core and F(0) containing the membrane proton channel, linked together by a central stalk and a peripheral stalk. During catalysis, ATP synthesis in the catalytic domain of F(1) is coupled via a rotary mechanism of the central stalk subunits to proton translocation. Its function is as follows. This protein is part of the stalk that links CF(0) to CF(1). It either transmits conformational changes from CF(0) to CF(1) or is implicated in proton conduction. This is ATP synthase subunit delta from Methylococcus capsulatus (strain ATCC 33009 / NCIMB 11132 / Bath).